The chain runs to 207 residues: 2,3-bisphosphoglycerate-dependent phosphoglycerate mutase (207 aa).

Substrate is bound by residues arginine 10–asparagine 17, threonine 23–glycine 24, arginine 62, glutamate 89–tyrosine 92, lysine 100, arginine 116–arginine 117, and glycine 160–asparagine 161. The active-site Tele-phosphohistidine intermediate is the histidine 11. The active-site Proton donor/acceptor is glutamate 89.

The protein belongs to the phosphoglycerate mutase family. BPG-dependent PGAM subfamily. As to quaternary structure, homodimer.

It carries out the reaction (2R)-2-phosphoglycerate = (2R)-3-phosphoglycerate. It participates in carbohydrate degradation; glycolysis; pyruvate from D-glyceraldehyde 3-phosphate: step 3/5. Functionally, catalyzes the interconversion of 2-phosphoglycerate and 3-phosphoglycerate. The chain is 2,3-bisphosphoglycerate-dependent phosphoglycerate mutase from Nitrobacter winogradskyi (strain ATCC 25391 / DSM 10237 / CIP 104748 / NCIMB 11846 / Nb-255).